Consider the following 60-residue polypeptide: UPF0434 protein ETA_21370 (60 aa).

It belongs to the UPF0434 family.

In Erwinia tasmaniensis (strain DSM 17950 / CFBP 7177 / CIP 109463 / NCPPB 4357 / Et1/99), this protein is UPF0434 protein ETA_21370.